Reading from the N-terminus, the 55-residue chain is Accessory gland-specific peptide 70A (55 aa).

The signal sequence occupies residues 1–19 (MKTLSVFLVLVCLLGLVQS). Residues Pro-28, Pro-32, Pro-34, and Pro-38 each carry the hydroxyproline modification. A disulfide bridge links Cys-43 with Cys-55.

As to expression, main cells of the accessory glands of males (paragonial gland).

Its subcellular location is the secreted. In terms of biological role, represses female sexual receptivity and stimulates oviposition. The sequence is that of Accessory gland-specific peptide 70A (Acp70A) from Drosophila sechellia (Fruit fly).